Consider the following 1147-residue polypeptide: Myosin heavy chain IB (1147 aa).

Residues 9 to 677 (RGVDDLVLMP…TLFHLEECLD (669 aa)) enclose the Myosin motor domain. An ATP-binding site is contributed by 103–110 (GESGAGKT). At S315 the chain carries Phosphoserine. The segment at 551–573 (CDALMEALSRCSPHYIRCIKPND) is actin-binding. The TH1 domain maps to 715 to 900 (KERQRHSVNR…RANIQIGIAT (186 aa)). 2 disordered regions span residues 901–954 (GLPK…YSQP) and 969–1089 (AAVP…APAA). 2 stretches are compositionally biased toward gly residues: residues 916–951 (SGGG…GGGY) and 975–1079 (GRGG…GAGR). The 58-residue stretch at 1090-1147 (PAKPQVKALYDYDAQTGDELTFKEGDTIIVHQKDPAGWWEGELNGKRGWVPANYVQDI) folds into the SH3 domain.

This sequence belongs to the TRAFAC class myosin-kinesin ATPase superfamily. Myosin family. As to quaternary structure, myosin I heavy chain is single-headed. Dimer of a heavy and a light chain. Inability to self-assemble into filaments.

Myosin is a protein that binds to F-actin and has ATPase activity that is activated by F-actin. This Acanthamoeba castellanii (Amoeba) protein is Myosin heavy chain IB (MIB).